We begin with the raw amino-acid sequence, 366 residues long: MNKVVLLCRPGFEKECAAEITDKAGQREIFGFARVKENAGYVIYECYQPDDGDKLIRELPFSSLIFARQWFVVGELLQHLPPEDRITPIVGMLQGVVEKGGELRVEVADTNESKELLKFCRKFTVPLRAALRDAGVLANYETPKRPVVHVFFIAPGCCYTGYSYSSNNSPFYMGIPRLKFPADAPSRSTLKLEEAFHVFIPADEWDERLANGMWAVDLGACPGGWTYQLVKRNMWVYSVDNGPMAQSLMDTGQVTWLREDGFKFRPTCSNISWMVCDMVEKPAKVAALMAQWLVNGWCRETIFNLKLPMKKRYEEVSHNLAYIQAQLDEHGINAQIQARQLYHDREEVTVHVRRIWAAVGGRRDER.

Residues serine 188, 221 to 224, aspartate 240, aspartate 260, and aspartate 277 contribute to the S-adenosyl-L-methionine site; that span reads CPGG. Lysine 306 (proton acceptor) is an active-site residue.

It belongs to the class I-like SAM-binding methyltransferase superfamily. RNA methyltransferase RlmE family. RlmM subfamily. In terms of assembly, monomer.

Its subcellular location is the cytoplasm. The catalysed reaction is cytidine(2498) in 23S rRNA + S-adenosyl-L-methionine = 2'-O-methylcytidine(2498) in 23S rRNA + S-adenosyl-L-homocysteine + H(+). Its function is as follows. Catalyzes the 2'-O-methylation at nucleotide C2498 in 23S rRNA. This chain is Ribosomal RNA large subunit methyltransferase M, found in Escherichia coli O45:K1 (strain S88 / ExPEC).